Reading from the N-terminus, the 350-residue chain is MNMEIFGNSISNILIFVVITLLGIFIGKIVDKIVRNYLKKIIDKTKTKFDDIILESIDLPIIVLVVTLFFYFGLRFLILPDYILKLIDEAVKVVVILSATYFAVKFIDGIFEHYLIPLTEKTETELDEHIIKPLKKVVKILTILLGILTALSSVGYDITALLAGLGVGGLALALAMQDTIKNFIAGILILIDKPFSLGHWVKVKGAEGIVEEIGIRSTRIRTFDYTLITIPNSELLDSAIENLTVRDRRRVLMTIGLTYNTPVEKIKRAKEIIKEIVENHPATLPPYRVHFREYGDWSLNLRVEYFVRNMGFDYYLNAVDEINLKIKEEFEKEGIEMAFPTYTVYLEKDN.

A run of 5 helical transmembrane segments spans residues 10-30 (ISNI…GKIV), 59-79 (LPII…FLIL), 91-111 (VKVV…DGIF), 130-150 (IIKP…ILTA), and 154-174 (VGYD…ALAL).

It belongs to the MscS (TC 1.A.23) family.

The protein resides in the cell membrane. Functionally, small-conductance mechanosensitive channel that opens in response to stretch forces in the membrane lipid bilayer. Exhibits a sixfold preference for cations over anions. Non-rectifying. This chain is Small-conductance mechanosensitive channel MscMJ, found in Methanocaldococcus jannaschii (strain ATCC 43067 / DSM 2661 / JAL-1 / JCM 10045 / NBRC 100440) (Methanococcus jannaschii).